Consider the following 186-residue polypeptide: Crossover junction endodeoxyribonuclease RuvC (186 aa).

Catalysis depends on residues Asp-7, Glu-73, and Asp-145. Asp-7, Glu-73, and Asp-145 together coordinate Mg(2+).

This sequence belongs to the RuvC family. Homodimer which binds Holliday junction (HJ) DNA. The HJ becomes 2-fold symmetrical on binding to RuvC with unstacked arms; it has a different conformation from HJ DNA in complex with RuvA. In the full resolvosome a probable DNA-RuvA(4)-RuvB(12)-RuvC(2) complex forms which resolves the HJ. The cofactor is Mg(2+).

The protein localises to the cytoplasm. It carries out the reaction Endonucleolytic cleavage at a junction such as a reciprocal single-stranded crossover between two homologous DNA duplexes (Holliday junction).. In terms of biological role, the RuvA-RuvB-RuvC complex processes Holliday junction (HJ) DNA during genetic recombination and DNA repair. Endonuclease that resolves HJ intermediates. Cleaves cruciform DNA by making single-stranded nicks across the HJ at symmetrical positions within the homologous arms, yielding a 5'-phosphate and a 3'-hydroxyl group; requires a central core of homology in the junction. The consensus cleavage sequence is 5'-(A/T)TT(C/G)-3'. Cleavage occurs on the 3'-side of the TT dinucleotide at the point of strand exchange. HJ branch migration catalyzed by RuvA-RuvB allows RuvC to scan DNA until it finds its consensus sequence, where it cleaves and resolves the cruciform DNA. This is Crossover junction endodeoxyribonuclease RuvC from Acidovorax sp. (strain JS42).